Here is a 611-residue protein sequence, read N- to C-terminus: UPF0508 protein SCY_3114 (611 aa).

This sequence belongs to the UPF0508 family.

The protein is UPF0508 protein SCY_3114 of Saccharomyces cerevisiae (strain YJM789) (Baker's yeast).